Here is a 184-residue protein sequence, read N- to C-terminus: DOMON domain-containing protein CBG21755 (184 aa).

The signal sequence occupies residues 1-20 (MIVPISLLFLFLSFVPFSYS). A DOMON domain is found at 28 to 145 (EVASMSWMVK…CVNWIVVPGG (118 aa)). N-linked (GlcNAc...) asparagine glycosylation is present at N49.

It is found in the secreted. The polypeptide is DOMON domain-containing protein CBG21755 (Caenorhabditis briggsae).